The sequence spans 362 residues: Peptide chain release factor 1 (362 aa).

Gln-237 bears the N5-methylglutamine mark. Residues 284–295 (EEEKRQAEETST) show a composition bias toward basic and acidic residues. The segment at 284 to 304 (EEEKRQAEETSTRRNLVASGD) is disordered.

This sequence belongs to the prokaryotic/mitochondrial release factor family. Methylated by PrmC. Methylation increases the termination efficiency of RF1.

It localises to the cytoplasm. In terms of biological role, peptide chain release factor 1 directs the termination of translation in response to the peptide chain termination codons UAG and UAA. The chain is Peptide chain release factor 1 from Pseudoalteromonas atlantica (strain T6c / ATCC BAA-1087).